The chain runs to 200 residues: MGISRDSRHKRSATGAKRAQFRKKRKFELGRQPANTKIGAKRIHSVRTRGGNKKYRALRIETGNFSWASEGISKKTRIAGVVYHPSNNELVRTNTLTKAAIVQIDATPFRQWFEAHYGQTLGKKKNVKEEETVAKSKNAERKWAARAASAKIESSVESQFSAGRLYACISSRPGQSGRCDGYILEGEELAFYLRRLTAKK.

Residues 1–31 (MGISRDSRHKRSATGAKRAQFRKKRKFELGR) form a disordered region. Position 62 is a phosphothreonine (T62). A phosphoserine mark is found at S66, S69, S73, and S86. Phosphothreonine is present on T107. 4 positions are modified to phosphoserine: S154, S155, S158, and S161.

It belongs to the eukaryotic ribosomal protein eS8 family. As to quaternary structure, component of the small ribosomal subunit (SSU). Mature yeast ribosomes consist of a small (40S) and a large (60S) subunit. The 40S small subunit contains 1 molecule of ribosomal RNA (18S rRNA) and 33 different proteins (encoded by 57 genes). The large 60S subunit contains 3 rRNA molecules (25S, 5.8S and 5S rRNA) and 46 different proteins (encoded by 81 genes).

It is found in the cytoplasm. Its function is as follows. Component of the ribosome, a large ribonucleoprotein complex responsible for the synthesis of proteins in the cell. The small ribosomal subunit (SSU) binds messenger RNAs (mRNAs) and translates the encoded message by selecting cognate aminoacyl-transfer RNA (tRNA) molecules. The large subunit (LSU) contains the ribosomal catalytic site termed the peptidyl transferase center (PTC), which catalyzes the formation of peptide bonds, thereby polymerizing the amino acids delivered by tRNAs into a polypeptide chain. The nascent polypeptides leave the ribosome through a tunnel in the LSU and interact with protein factors that function in enzymatic processing, targeting, and the membrane insertion of nascent chains at the exit of the ribosomal tunnel. The polypeptide is Small ribosomal subunit protein eS8A (Saccharomyces cerevisiae (strain ATCC 204508 / S288c) (Baker's yeast)).